We begin with the raw amino-acid sequence, 1247 residues long: Nidogen-1 (1247 aa).

The first 28 residues, 1-28 (MLASSSRIRAAWTRALLLPLLLAGPVGC), serve as a signal peptide directing secretion. Residues 106–268 (PFLADLDTTD…GVWVFEIGSP (163 aa)) form the NIDO domain. Sulfotyrosine is present on residues Y289 and Y296. In terms of domain architecture, EGF-like 1 spans 386–426 (SRQTCANNRHQCSVHAECRDYATGFCCSCVAGYTGNGRQCV). Disulfide bonds link C390/C403, C397/C412, C411/C618, C414/C425, C672/C685, C679/C695, C697/C708, C714/C727, C721/C736, C738/C750, C762/C777, C769/C787, C789/C800, C806/C817, C811/C826, C828/C839, C849/C878, C889/C896, and C898/C919. The Nidogen G2 beta-barrel domain maps to 430 to 667 (SPQRVNGKVK…GPVREGSPDA (238 aa)). The EGF-like 2 domain maps to 668–709 (LQNPCYIGTHGCDTNAACRPGPRTQFTCECSIGFRGDGRTCY). The short motif at 702–704 (RGD) is the Cell attachment site element. Positions 710 to 751 (DIDECSEQPSVCGSHTICNNHPGTFRCECVEGYQFSDEGTCV) constitute an EGF-like 3; calcium-binding domain. One can recognise an EGF-like 4 domain in the interval 758–801 (PINYCETGLHNCDIPQRAQCIYTGGSSYTCSCLPGFSGDGQACQ). The region spanning 802–840 (DVDECQPSRCHPDAFCYNTPGSFTCQCKPGYQGDGFRCV) is the EGF-like 5; calcium-binding domain. Residues 846–919 (KTRCQHEREH…RTRPGMTPPC (74 aa)) enclose the Thyroglobulin type-1 domain. O-linked (GalNAc...) threonine glycosylation is found at T922 and T935. 4 LDL-receptor class B repeats span residues 990-1032 (KMVY…DHLG), 1033-1075 (RNIF…DSVR), 1076-1120 (GNLY…DAFS), and 1121-1162 (SQLC…YGKN). The 37-residue stretch at 1208–1244 (GHNYCSVNNGGCTHLCLATPGSRTCRCPDNTLGVDCI) folds into the EGF-like 6 domain. Disulfide bonds link C1212–C1223, C1219–C1232, and C1234–C1243.

As to quaternary structure, interacts with FBLN1. Interacts with LGALS3BP. Interacts with PLXDC1. Interacts with SVEP1. Post-translationally, N- and O-glycosylated.

The protein resides in the secreted. It localises to the extracellular space. It is found in the extracellular matrix. Its subcellular location is the basement membrane. Its function is as follows. Sulfated glycoprotein widely distributed in basement membranes and tightly associated with laminin. Also binds to collagen IV and perlecan. It probably has a role in cell-extracellular matrix interactions. In Homo sapiens (Human), this protein is Nidogen-1 (NID1).